The chain runs to 150 residues: S-protein homolog 3 (150 aa).

The first 23 residues, 1–23, serve as a signal peptide directing secretion; it reads MKNILKTQVHVVVIYLLIKIAFS. 2 N-linked (GlcNAc...) asparagine glycosylation sites follow: asparagine 32 and asparagine 70.

It belongs to the plant self-incompatibility (S1) protein family.

It localises to the secreted. The chain is S-protein homolog 3 from Arabidopsis thaliana (Mouse-ear cress).